We begin with the raw amino-acid sequence, 461 residues long: ATP synthase subunit beta (461 aa).

151 to 158 (GGAGVGKT) is a binding site for ATP.

The protein belongs to the ATPase alpha/beta chains family. As to quaternary structure, F-type ATPases have 2 components, CF(1) - the catalytic core - and CF(0) - the membrane proton channel. CF(1) has five subunits: alpha(3), beta(3), gamma(1), delta(1), epsilon(1). CF(0) has three main subunits: a(1), b(2) and c(9-12). The alpha and beta chains form an alternating ring which encloses part of the gamma chain. CF(1) is attached to CF(0) by a central stalk formed by the gamma and epsilon chains, while a peripheral stalk is formed by the delta and b chains.

It is found in the cell inner membrane. It catalyses the reaction ATP + H2O + 4 H(+)(in) = ADP + phosphate + 5 H(+)(out). Functionally, produces ATP from ADP in the presence of a proton gradient across the membrane. The catalytic sites are hosted primarily by the beta subunits. The chain is ATP synthase subunit beta from Coxiella burnetii (strain RSA 331 / Henzerling II).